We begin with the raw amino-acid sequence, 747 residues long: MDANQKLLDFAKLLNQKNDSRPVIEKLKDNISGDLLNYFLNLLEEISKLDTDQPLSVTSLRCLQLFVHLTFLLGVYTQLPKEMLSQAKIKALPIYTPKKNLVQIYNILLPLLLTPSLLQGPLNLHYADLLLLHLYLLNCHEQGSLIEEPRPLFLDPSWKEKVTSIMSPQMVDPSKMISSCLSLLQPNVDNWLQDKLKHYLTTCLCRETGVQGFLKVYMQAQPNSIERARQAAHLISSVPKDISPQKYFSCILPQVWSLFSTQPRLASQLIIAVTNTHCDIVTSFLLKKLQILEAPKVIDLSPFENALDVLQVLVYIQNDDIIRICESCVPSLLHLQENTTLRSKVQDILLRIISVCGTKSLLRNLTNAKHLRIFCERLTKSQLAMFLPNLLEIWVQQPPDKRLELLELVQYALSNVDSDEIPSNVMLSVCTNLINEVASQNKYSSTEISQITTNREVEEENEEILLVLLNIISSVIGRNAELDLENPISSLLPALEQLSNYSNREISDLAKDVYKTLIQSKDDYSLALSYTQSDLVPVRGQGVYMLRKLIEKKDDRINPVRVLHVLINLLRDENSYVHLNVISAVVSLCDKYDDSLIRLLKEYTNTNKFTVDETLLIGQAIYQTMERQGELVAKFYGQIEQTCLSMLNNENTDIKISSLNIARLLCQMTSSDAFIESAKNILILEMGSDKQFLRRAAVQLLDSCKHLPDSVITTLSYVGSHDKDDFIKESCLNILANQADAAKYYLQ.

7 HEAT repeats span residues asparagine 37–valine 75, glutamine 103–glutamate 141, aspartate 320–threonine 358, serine 381–serine 418, glutamate 459–glutamate 485, asparagine 486–aspartate 523, and isoleucine 557–aspartate 594.

Belongs to the Tango6 family. Interacts with RNA polymerase II subunits. Interacts with nuclear pore complex subunits.

It is found in the cytoplasm. Its subcellular location is the nucleus. Required for the cytoplasmic assembly and the nuclear import of RNA polymerase II. The protein is RNA polymerase II assembly factor rtp1 of Schizosaccharomyces pombe (strain 972 / ATCC 24843) (Fission yeast).